We begin with the raw amino-acid sequence, 432 residues long: Serine/threonine-protein kinase Sgk1 (432 aa).

The tract at residues 67-93 is disordered; that stretch reads PELMNANPSPPPSPSQQINLGPSSNPH. The segment covering 82–92 has biased composition (polar residues); the sequence is QQINLGPSSNP. In terms of domain architecture, Protein kinase spans 99-356; that stretch reads FHFLKVIGKG…FTEIKNHIFF (258 aa). Residues 105–113 and lysine 128 each bind ATP; that span reads IGKGSFGKV. Residue aspartate 223 is the Proton acceptor of the active site. Positions 357–432 constitute an AGC-kinase C-terminal domain; that stretch reads SPINWDDLIN…SYAPPVDSFL (76 aa).

The protein belongs to the protein kinase superfamily. AGC Ser/Thr protein kinase family.

The protein localises to the cytoplasm. It localises to the nucleus. The protein resides in the endoplasmic reticulum. The catalysed reaction is L-seryl-[protein] + ATP = O-phospho-L-seryl-[protein] + ADP + H(+). It carries out the reaction L-threonyl-[protein] + ATP = O-phospho-L-threonyl-[protein] + ADP + H(+). Its function is as follows. Protein kinase that may play an important role in cellular stress response. May be involved in the regulation of processes such as cell survival, neuronal excitability and renal sodium excretion. The polypeptide is Serine/threonine-protein kinase Sgk1 (SGK1) (Gallus gallus (Chicken)).